Here is a 98-residue protein sequence, read N- to C-terminus: Derivative of benzaldehyde biosynthesis cluster protein C (98 aa).

It belongs to the YciI family.

Its pathway is secondary metabolite biosynthesis. Part of the gene cluster that mediates the biosynthesis of the antibiotic 2,4-dihydroxy-3-methyl-6-(2-oxopropyl)benzaldehyde (DHMBA) and its derivatives. The direct non-reducing polyketide synthase dbaI product is 2,4-dihydroxy-3-methyl-6-(2-oxopropyl)benzaldehyde (DHMBA), produced by condensation of one acetyl-CoA starter unit with 4 malonyl-CoA units and one methylation step. The FAD-dependent monooxygenase dbaH is responsible for the synthesis of yellow pigments derived from the oxidation of DHMBA. The roles of dbaB, C, E and F have still to be determined. The sequence is that of Derivative of benzaldehyde biosynthesis cluster protein C from Emericella nidulans (strain FGSC A4 / ATCC 38163 / CBS 112.46 / NRRL 194 / M139) (Aspergillus nidulans).